Reading from the N-terminus, the 307-residue chain is Elongation factor Ts (307 aa).

Residues 79 to 82 are involved in Mg(2+) ion dislocation from EF-Tu; it reads TDFV.

It belongs to the EF-Ts family.

Its subcellular location is the cytoplasm. Functionally, associates with the EF-Tu.GDP complex and induces the exchange of GDP to GTP. It remains bound to the aminoacyl-tRNA.EF-Tu.GTP complex up to the GTP hydrolysis stage on the ribosome. The sequence is that of Elongation factor Ts from Bartonella tribocorum (strain CIP 105476 / IBS 506).